Here is a 468-residue protein sequence, read N- to C-terminus: UDP-N-acetylmuramate--L-alanine ligase (468 aa).

117–123 lines the ATP pocket; the sequence is GTHGKTT.

The protein belongs to the MurCDEF family.

Its subcellular location is the cytoplasm. It carries out the reaction UDP-N-acetyl-alpha-D-muramate + L-alanine + ATP = UDP-N-acetyl-alpha-D-muramoyl-L-alanine + ADP + phosphate + H(+). It functions in the pathway cell wall biogenesis; peptidoglycan biosynthesis. Its function is as follows. Cell wall formation. This chain is UDP-N-acetylmuramate--L-alanine ligase, found in Maricaulis maris (strain MCS10) (Caulobacter maris).